Here is an 85-residue protein sequence, read N- to C-terminus: Alpha-defensin 11 (85 aa).

The first 11 residues, 1–11 (ALVLLAFQVQA), serve as a signal peptide directing secretion. Residues 12–50 (DPIQNTDEETKTEEQPGEEDQAVSVSFGDPEGTSLQEES) constitute a propeptide that is removed on maturation. The interval 14 to 46 (IQNTDEETKTEEQPGEEDQAVSVSFGDPEGTSL) is disordered. 3 disulfide bridges follow: cysteine 56-cysteine 84, cysteine 58-cysteine 73, and cysteine 63-cysteine 83.

Belongs to the alpha-defensin family. As to expression, paneth cells of the small bowel.

It is found in the secreted. Probably contributes to the antimicrobial barrier function of the small bowel mucosa. This is Alpha-defensin 11 (Defa11) from Mus musculus (Mouse).